A 222-amino-acid chain; its full sequence is Deoxyribose-phosphate aldolase (222 aa).

Asp89 serves as the catalytic Proton donor/acceptor. Lys152 serves as the catalytic Schiff-base intermediate with acetaldehyde. The active-site Proton donor/acceptor is Lys181.

This sequence belongs to the DeoC/FbaB aldolase family. DeoC type 1 subfamily.

The protein localises to the cytoplasm. It carries out the reaction 2-deoxy-D-ribose 5-phosphate = D-glyceraldehyde 3-phosphate + acetaldehyde. It functions in the pathway carbohydrate degradation; 2-deoxy-D-ribose 1-phosphate degradation; D-glyceraldehyde 3-phosphate and acetaldehyde from 2-deoxy-alpha-D-ribose 1-phosphate: step 2/2. In terms of biological role, catalyzes a reversible aldol reaction between acetaldehyde and D-glyceraldehyde 3-phosphate to generate 2-deoxy-D-ribose 5-phosphate. This chain is Deoxyribose-phosphate aldolase, found in Clostridium novyi (strain NT).